Reading from the N-terminus, the 472-residue chain is Inhibitor of Apoptosis OPG037 (472 aa).

ANK repeat units lie at residues 97-126 (DGNYPLHIASKINNNRIVAMLLTHGADPNA), 130-161 (HNKTPLYYLSGTDDEVIERINLLVQYGAKINN), 233-263 (DGNTPLHIVCSKTVKNVDIIDLLLPSTDVNK), 267-297 (FGDSPLTLLIKTLSPAHLINKLLSTSNVITD), 322-351 (YDSTDFKMAVEVGSIRCVKYLLDNDIICED), and 353-377 (MYYAVLSEYETMVDYLLFNHFSVDS).

The protein belongs to the orthopoxvirus OPG037 protein family. As to quaternary structure, may interact with host caspase-9-Apaf-1 complex.

The protein localises to the host cytoplasm. Inhibits host apoptosis. Acts by associating with host apoptosome. The chain is Inhibitor of Apoptosis OPG037 (OPG037) from Homo sapiens (Human).